A 364-amino-acid polypeptide reads, in one-letter code: Dihydroorotate dehydrogenase (quinone) (364 aa).

FMN-binding positions include 61–65 (AGFDK) and Ser85. Lys65 serves as a coordination point for substrate. Residue 110–114 (NRMGF) participates in substrate binding. The FMN site is built by Asn139 and Asn170. Asn170 contacts substrate. The active-site Nucleophile is Ser173. Asn175 serves as a coordination point for substrate. Positions 214 and 242 each coordinate FMN. Substrate is bound at residue 243–244 (NT). FMN-binding positions include Gly266, Gly295, and 316-317 (YS).

Belongs to the dihydroorotate dehydrogenase family. Type 2 subfamily. Monomer. Requires FMN as cofactor.

The protein resides in the cell membrane. It catalyses the reaction (S)-dihydroorotate + a quinone = orotate + a quinol. Its pathway is pyrimidine metabolism; UMP biosynthesis via de novo pathway; orotate from (S)-dihydroorotate (quinone route): step 1/1. Its function is as follows. Catalyzes the conversion of dihydroorotate to orotate with quinone as electron acceptor. In Bradyrhizobium sp. (strain BTAi1 / ATCC BAA-1182), this protein is Dihydroorotate dehydrogenase (quinone).